The following is a 222-amino-acid chain: Pyridoxine/pyridoxamine 5'-phosphate oxidase (222 aa).

Residues 11-14 (RVEY) and Lys79 each bind substrate. Residues 74 to 79 (RTVLCK), 89 to 90 (YT), Lys96, and Gln118 each bind FMN. Substrate contacts are provided by Tyr136, Arg140, and Ser144. FMN is bound by residues 153–154 (QS) and Trp199. 205-207 (RVH) is a binding site for substrate. An FMN-binding site is contributed by Arg209.

The protein belongs to the pyridoxamine 5'-phosphate oxidase family. Homodimer. FMN serves as cofactor.

The catalysed reaction is pyridoxamine 5'-phosphate + O2 + H2O = pyridoxal 5'-phosphate + H2O2 + NH4(+). It carries out the reaction pyridoxine 5'-phosphate + O2 = pyridoxal 5'-phosphate + H2O2. The protein operates within cofactor metabolism; pyridoxal 5'-phosphate salvage; pyridoxal 5'-phosphate from pyridoxamine 5'-phosphate: step 1/1. It functions in the pathway cofactor metabolism; pyridoxal 5'-phosphate salvage; pyridoxal 5'-phosphate from pyridoxine 5'-phosphate: step 1/1. Its function is as follows. Catalyzes the oxidation of either pyridoxine 5'-phosphate (PNP) or pyridoxamine 5'-phosphate (PMP) into pyridoxal 5'-phosphate (PLP). The chain is Pyridoxine/pyridoxamine 5'-phosphate oxidase from Mycolicibacterium vanbaalenii (strain DSM 7251 / JCM 13017 / BCRC 16820 / KCTC 9966 / NRRL B-24157 / PYR-1) (Mycobacterium vanbaalenii).